The chain runs to 622 residues: UvrABC system protein C (622 aa).

The GIY-YIG domain occupies 13 to 92 (EKPGVYLMKN…IKKYRPKYNI (80 aa)). A UVR domain is found at 204-239 (KDILDKLKNQMEEASNSLQFEKAASLRDKIFAVKKI).

It belongs to the UvrC family. As to quaternary structure, interacts with UvrB in an incision complex.

It localises to the cytoplasm. Its function is as follows. The UvrABC repair system catalyzes the recognition and processing of DNA lesions. UvrC both incises the 5' and 3' sides of the lesion. The N-terminal half is responsible for the 3' incision and the C-terminal half is responsible for the 5' incision. The polypeptide is UvrABC system protein C (Clostridium tetani (strain Massachusetts / E88)).